The chain runs to 513 residues: GMP synthase [glutamine-hydrolyzing] (513 aa).

In terms of domain architecture, Glutamine amidotransferase type-1 spans 9 to 198 (LILVLDFGSQ…VRRVCDCIGE (190 aa)). Cys-86 acts as the Nucleophile in catalysis. Catalysis depends on residues His-172 and Glu-174. One can recognise a GMPS ATP-PPase domain in the interval 199–388 (WSMENFIEIE…LGIPEHLVWR (190 aa)). Residue 226–232 (SGGVDSS) participates in ATP binding.

Homodimer.

The catalysed reaction is XMP + L-glutamine + ATP + H2O = GMP + L-glutamate + AMP + diphosphate + 2 H(+). Its pathway is purine metabolism; GMP biosynthesis; GMP from XMP (L-Gln route): step 1/1. In terms of biological role, catalyzes the synthesis of GMP from XMP. This Staphylococcus saprophyticus subsp. saprophyticus (strain ATCC 15305 / DSM 20229 / NCIMB 8711 / NCTC 7292 / S-41) protein is GMP synthase [glutamine-hydrolyzing].